Consider the following 364-residue polypeptide: UDP-N-acetylglucosamine--N-acetylmuramyl-(pentapeptide) pyrophosphoryl-undecaprenol N-acetylglucosamine transferase (364 aa).

UDP-N-acetyl-alpha-D-glucosamine contacts are provided by residues 10–12 (TGG), N128, R170, S199, I250, and Q295.

Belongs to the glycosyltransferase 28 family. MurG subfamily.

It is found in the cell inner membrane. It catalyses the reaction di-trans,octa-cis-undecaprenyl diphospho-N-acetyl-alpha-D-muramoyl-L-alanyl-D-glutamyl-meso-2,6-diaminopimeloyl-D-alanyl-D-alanine + UDP-N-acetyl-alpha-D-glucosamine = di-trans,octa-cis-undecaprenyl diphospho-[N-acetyl-alpha-D-glucosaminyl-(1-&gt;4)]-N-acetyl-alpha-D-muramoyl-L-alanyl-D-glutamyl-meso-2,6-diaminopimeloyl-D-alanyl-D-alanine + UDP + H(+). It participates in cell wall biogenesis; peptidoglycan biosynthesis. Functionally, cell wall formation. Catalyzes the transfer of a GlcNAc subunit on undecaprenyl-pyrophosphoryl-MurNAc-pentapeptide (lipid intermediate I) to form undecaprenyl-pyrophosphoryl-MurNAc-(pentapeptide)GlcNAc (lipid intermediate II). This is UDP-N-acetylglucosamine--N-acetylmuramyl-(pentapeptide) pyrophosphoryl-undecaprenol N-acetylglucosamine transferase from Chlorobaculum parvum (strain DSM 263 / NCIMB 8327) (Chlorobium vibrioforme subsp. thiosulfatophilum).